The primary structure comprises 589 residues: MTLVNVGPERFDVWAPDVSSVVLVADGRQYPMQKKETAPGSEGWWTASDAPPNGDVDYGYLLDGNTTPVPEPRSRRLPAGVHNHSRTYNPPPYRWQDSRWRGKELQGTLIYQLHVGTSTPDGTLDAAGEKLSYLVDLGIDFIELLPVNGFNGTHNWGYDGVQWYTVHEGYGGPAAYQRFVDAAHAAGLGVIQDVVYNHLGLRGNYFPKLGPNLKQGDANTLGDSVNLDGAGSDVFREYILDNAALWVGDYHVDGVGFDAVHAVRDERAVHILEDLGALGDAISGETGLPKTLIAESDFNNPRLIYPRDVNGYGLAGQWSDDFHTAVHVSVSGETTGYYSDFESLAVLAKVLKDGFLHDGSYSSFRGRHHGRPINPSLANPAALVVCNQNHDQIGNRATGDRLSQSLSYGQLAVAAVLTLTSPFTPMLFMGEEYGASTPWQFFTSHPEPELGKATAEGRIKEFERMGWDPAVVPDPQDPETFNRSKLDWSEASTGDHARLLELYKSLTALRREHPDLADLGFGQTEVSFDDDAGWLRFRPVSVEVLVNLSDAKVRLDDAAGDLLLATDEGNPLDGGSLALVPWSAAVLKS.

Position 256–261 (256–261) interacts with substrate; sequence GFDAVH. Residue aspartate 258 is the Nucleophile of the active site. The Proton donor role is filled by glutamate 295. Residues 320–324 and 390–395 contribute to the substrate site; these read DDFHT and HDQIGN.

Belongs to the glycosyl hydrolase 13 family.

The protein resides in the cytoplasm. It carries out the reaction hydrolysis of (1-&gt;4)-alpha-D-glucosidic linkage in 4-alpha-D-[(1-&gt;4)-alpha-D-glucanosyl]n trehalose to yield trehalose and (1-&gt;4)-alpha-D-glucan.. Its pathway is glycan biosynthesis; trehalose biosynthesis. The polypeptide is Malto-oligosyltrehalose trehalohydrolase (treZ) (Brevibacterium helvolum).